The primary structure comprises 264 residues: 3-methyl-2-oxobutanoate hydroxymethyltransferase (264 aa).

Mg(2+)-binding residues include D45 and D84. Residues 45-46 (DS), D84, and K112 contribute to the 3-methyl-2-oxobutanoate site. Residue E114 participates in Mg(2+) binding. Residue E181 is the Proton acceptor of the active site.

This sequence belongs to the PanB family. In terms of assembly, homodecamer; pentamer of dimers. Requires Mg(2+) as cofactor.

It is found in the cytoplasm. It catalyses the reaction 3-methyl-2-oxobutanoate + (6R)-5,10-methylene-5,6,7,8-tetrahydrofolate + H2O = 2-dehydropantoate + (6S)-5,6,7,8-tetrahydrofolate. It functions in the pathway cofactor biosynthesis; (R)-pantothenate biosynthesis; (R)-pantoate from 3-methyl-2-oxobutanoate: step 1/2. Functionally, catalyzes the reversible reaction in which hydroxymethyl group from 5,10-methylenetetrahydrofolate is transferred onto alpha-ketoisovalerate to form ketopantoate. The protein is 3-methyl-2-oxobutanoate hydroxymethyltransferase of Cronobacter sakazakii (strain ATCC BAA-894) (Enterobacter sakazakii).